The sequence spans 421 residues: Testin (421 aa).

Residues 92–199 (MILTNPVAAK…GDVKLPQEMD (108 aa)) enclose the PET domain. 3 consecutive LIM zinc-binding domains span residues 234–297 (YSCY…CDSE), 299–359 (PRCA…NHAV), and 362–421 (QGCH…KMMS).

Belongs to the prickle / espinas / testin family. In terms of assembly, interacts via LIM domain 1 with ZYX. Interacts (via LIM domain 3) with ENAH and VASP. Interacts with ALKBH4, talin, actin, alpha-actinin, GRIP1 and PXN. Interacts (via LIM domain 2) with ACTL7A (via N-terminus). Heterodimer with ACTL7A; the heterodimer interacts with ENAH to form a heterotrimer.

Its subcellular location is the cytoplasm. The protein resides in the cell junction. It is found in the focal adhesion. Its function is as follows. Scaffold protein that may play a role in cell adhesion, cell spreading and in the reorganization of the actin cytoskeleton. Plays a role in the regulation of cell proliferation. May act as a tumor suppressor. The sequence is that of Testin (TES) from Loxodonta africana (African elephant).